The following is a 984-amino-acid chain: Probable beta-galactosidase C (984 aa).

The N-terminal stretch at 1–23 (MRLLSFIYLVWLALLTGTPQVSA) is a signal peptide. Positions 82, 127, 128, 129, and 187 each coordinate substrate. The active-site Proton donor is Glu-188. Residue Asn-197 is glycosylated (N-linked (GlcNAc...) asparagine). Tyr-251 serves as a coordination point for substrate. Cys-257 and Cys-304 form a disulfide bridge. An N-linked (GlcNAc...) asparagine glycan is attached at Asn-276. Glu-287 acts as the Nucleophile in catalysis. Position 353 (Tyr-353) interacts with substrate. N-linked (GlcNAc...) asparagine glycosylation is found at Asn-391, Asn-421, Asn-434, Asn-517, Asn-602, Asn-677, Asn-715, Asn-720, Asn-759, and Asn-805.

The protein belongs to the glycosyl hydrolase 35 family.

The protein resides in the secreted. The catalysed reaction is Hydrolysis of terminal non-reducing beta-D-galactose residues in beta-D-galactosides.. Cleaves beta-linked terminal galactosyl residues from gangliosides, glycoproteins, and glycosaminoglycans. This is Probable beta-galactosidase C (lacC) from Aspergillus oryzae (strain ATCC 42149 / RIB 40) (Yellow koji mold).